We begin with the raw amino-acid sequence, 696 residues long: METKVQVEFGGRTITIETGKMAKQASGAVVVSSGDTMVLVTAVATKTAKEGQDFFPLTVNYQEKAYAGGKIPGGFFKREARPSDNETLTCRLIDRPIRPLFPENFLNDTQIMATVVSADKDNDPGILSMVGASAALMVSDIPFQGPIAGVKVGRVDGRFIANPTADEMEKSDIEIVVAASKDAVIMVEGSAAEVSEEDMLEAIFFGHAAIQPLLAAQEELCSKAGVAKREVPPPAVNEELKANVKDIAYARMKEAVRIKSKVERHNSIDAISAETLAALATEFEGCDKQIKAFLGDFEYELVREHILKDGERIDGRDTKTIRQITTEVSLLPRAHGSALFTRGETQSLVAATLGTSIDEQRIDSLFGESKKRFLLHYNFPPFSVGETSFRLGPGRREIGHGMLAERALARVLPKHDDFPYTIRIVSDILESNGSSSMASVCGGSMSMMDAGIPIKAPVAGIAMGLIKEGEDFAILSDILGDEDHLGDMDFKVAGTAEGVTALQMDIKIGGVTREIMGIALKQALEGRLHILGRMADTIKTSKSDLSTYAPRITTIYVKTDKIRDVIGSGGKNIRGITEATGVTIDIDDTGKINIASTDKAACDLAIKMIRDLTAEAEEGKLYMGLVKKVMEFGAFVEIFPGTDGLVHISELDTERVKNVTDILKEGDKVLVKCIGIDKQGKIKLSRKEALGATLPE.

Mg(2+) is bound by residues D483 and D489. The KH domain maps to 550–609 (PRITTIYVKTDKIRDVIGSGGKNIRGITEATGVTIDIDDTGKINIASTDKAACDLAIKMI). The 69-residue stretch at 619–687 (GKLYMGLVKK…KQGKIKLSRK (69 aa)) folds into the S1 motif domain.

Belongs to the polyribonucleotide nucleotidyltransferase family. Requires Mg(2+) as cofactor.

The protein localises to the cytoplasm. It catalyses the reaction RNA(n+1) + phosphate = RNA(n) + a ribonucleoside 5'-diphosphate. Its function is as follows. Involved in mRNA degradation. Catalyzes the phosphorolysis of single-stranded polyribonucleotides processively in the 3'- to 5'-direction. This chain is Polyribonucleotide nucleotidyltransferase, found in Geotalea uraniireducens (strain Rf4) (Geobacter uraniireducens).